Reading from the N-terminus, the 471-residue chain is Glutamate--tRNA ligase (471 aa).

The 'HIGH' region signature appears at 9-19 (PSPTGYLHVGG). Zn(2+)-binding residues include Cys-98, Cys-100, Cys-125, and Asp-127. Residues 237–241 (KLSKR) carry the 'KMSKS' region motif. Lys-240 is an ATP binding site.

The protein belongs to the class-I aminoacyl-tRNA synthetase family. Glutamate--tRNA ligase type 1 subfamily. Monomer. Requires Zn(2+) as cofactor.

It is found in the cytoplasm. The enzyme catalyses tRNA(Glu) + L-glutamate + ATP = L-glutamyl-tRNA(Glu) + AMP + diphosphate. In terms of biological role, catalyzes the attachment of glutamate to tRNA(Glu) in a two-step reaction: glutamate is first activated by ATP to form Glu-AMP and then transferred to the acceptor end of tRNA(Glu). The sequence is that of Glutamate--tRNA ligase from Yersinia pseudotuberculosis serotype IB (strain PB1/+).